Consider the following 277-residue polypeptide: Xyloglucan endotransglucosylase/hydrolase protein 19 (277 aa).

The first 21 residues, 1–21 (MKSFTFLILFLFAAQSISVYA), serve as a signal peptide directing secretion. The region spanning 22-213 (GSFHKDVKIH…WSKAPFTAYY (192 aa)) is the GH16 domain. The active-site Nucleophile is Glu99. Glu103 acts as the Proton donor in catalysis. Glu103 contributes to the xyloglucan binding site. The N-linked (GlcNAc...) asparagine glycan is linked to Asn107. Xyloglucan is bound by residues 116–118 (HTN), 126–128 (DKE), 192–193 (HW), and Gly197. Cystine bridges form between Cys221-Cys230 and Cys262-Cys276. Arg267 contacts xyloglucan.

This sequence belongs to the glycosyl hydrolase 16 family. XTH group 2 subfamily. Post-translationally, contains at least one intrachain disulfide bond essential for its enzymatic activity. Root specific.

It localises to the secreted. The protein localises to the cell wall. It is found in the extracellular space. The protein resides in the apoplast. The enzyme catalyses breaks a beta-(1-&gt;4) bond in the backbone of a xyloglucan and transfers the xyloglucanyl segment on to O-4 of the non-reducing terminal glucose residue of an acceptor, which can be a xyloglucan or an oligosaccharide of xyloglucan.. In terms of biological role, possesses xyloglucan endotransglucosylase (XET) activity in vitro. Does not possess xyloglucan endohydrolysis (XEH) activity. Cleaves and religates xyloglucan polymers, an essential constituent of the primary cell wall, and thereby participates in cell wall construction of growing tissues. Involved in cell proliferation in the tissue reunion process of wounded inflorescence stems. Maybe a downstream target of NAC071 as a consequence of auxin action in wounded stems. The protein is Xyloglucan endotransglucosylase/hydrolase protein 19 of Arabidopsis thaliana (Mouse-ear cress).